The following is a 502-amino-acid chain: Lysine--tRNA ligase (502 aa).

Glutamate 413 and glutamate 420 together coordinate Mg(2+).

The protein belongs to the class-II aminoacyl-tRNA synthetase family. Homodimer. Mg(2+) is required as a cofactor.

The protein localises to the cytoplasm. The catalysed reaction is tRNA(Lys) + L-lysine + ATP = L-lysyl-tRNA(Lys) + AMP + diphosphate. In Haemophilus influenzae (strain PittEE), this protein is Lysine--tRNA ligase.